The following is an 83-amino-acid chain: Exodeoxyribonuclease 7 small subunit (83 aa).

The protein belongs to the XseB family. Heterooligomer composed of large and small subunits.

Its subcellular location is the cytoplasm. The enzyme catalyses Exonucleolytic cleavage in either 5'- to 3'- or 3'- to 5'-direction to yield nucleoside 5'-phosphates.. In terms of biological role, bidirectionally degrades single-stranded DNA into large acid-insoluble oligonucleotides, which are then degraded further into small acid-soluble oligonucleotides. This chain is Exodeoxyribonuclease 7 small subunit, found in Rhizobium leguminosarum bv. trifolii (strain WSM2304).